A 286-amino-acid chain; its full sequence is Bifunctional protein FolD (286 aa).

NADP(+) contacts are provided by residues 165 to 167 (GRS), Ser190, and Val231.

Belongs to the tetrahydrofolate dehydrogenase/cyclohydrolase family. In terms of assembly, homodimer.

The catalysed reaction is (6R)-5,10-methylene-5,6,7,8-tetrahydrofolate + NADP(+) = (6R)-5,10-methenyltetrahydrofolate + NADPH. It catalyses the reaction (6R)-5,10-methenyltetrahydrofolate + H2O = (6R)-10-formyltetrahydrofolate + H(+). It functions in the pathway one-carbon metabolism; tetrahydrofolate interconversion. In terms of biological role, catalyzes the oxidation of 5,10-methylenetetrahydrofolate to 5,10-methenyltetrahydrofolate and then the hydrolysis of 5,10-methenyltetrahydrofolate to 10-formyltetrahydrofolate. In Bacillus thuringiensis (strain Al Hakam), this protein is Bifunctional protein FolD.